Reading from the N-terminus, the 253-residue chain is Imidazole glycerol phosphate synthase subunit HisF (253 aa).

Active-site residues include aspartate 11 and aspartate 130.

Belongs to the HisA/HisF family. As to quaternary structure, heterodimer of HisH and HisF.

The protein resides in the cytoplasm. It carries out the reaction 5-[(5-phospho-1-deoxy-D-ribulos-1-ylimino)methylamino]-1-(5-phospho-beta-D-ribosyl)imidazole-4-carboxamide + L-glutamine = D-erythro-1-(imidazol-4-yl)glycerol 3-phosphate + 5-amino-1-(5-phospho-beta-D-ribosyl)imidazole-4-carboxamide + L-glutamate + H(+). It functions in the pathway amino-acid biosynthesis; L-histidine biosynthesis; L-histidine from 5-phospho-alpha-D-ribose 1-diphosphate: step 5/9. In terms of biological role, IGPS catalyzes the conversion of PRFAR and glutamine to IGP, AICAR and glutamate. The HisF subunit catalyzes the cyclization activity that produces IGP and AICAR from PRFAR using the ammonia provided by the HisH subunit. The polypeptide is Imidazole glycerol phosphate synthase subunit HisF (Cereibacter sphaeroides (strain ATCC 17029 / ATH 2.4.9) (Rhodobacter sphaeroides)).